Reading from the N-terminus, the 269-residue chain is Phosphonoacetaldehyde hydrolase (269 aa).

D10 (nucleophile) is an active-site residue. The Mg(2+) site is built by D10 and A12. K52 functions as the Schiff-base intermediate with substrate in the catalytic mechanism. D186 contributes to the Mg(2+) binding site.

Belongs to the HAD-like hydrolase superfamily. PhnX family. In terms of assembly, homodimer. Mg(2+) serves as cofactor.

It catalyses the reaction phosphonoacetaldehyde + H2O = acetaldehyde + phosphate + H(+). Its function is as follows. Involved in phosphonate degradation. This chain is Phosphonoacetaldehyde hydrolase, found in Salmonella paratyphi A (strain ATCC 9150 / SARB42).